The primary structure comprises 371 residues: Queuine tRNA-ribosyltransferase (371 aa).

D90 acts as the Nucleophile in catalysis. Residue D90 is the Proton acceptor of the active site. Substrate contacts are provided by residues 90 to 94, S91, D144, Q189, and G215; that span reads DSGGF. The segment at 246-252 is RNA binding; sequence GVGTPEN. The Nucleophile role is filled by D265. Positions 270-274 are RNA binding; important for wobble base 34 recognition; sequence TRNAR. Positions 303, 305, 308, and 334 each coordinate Zn(2+).

The protein belongs to the queuine tRNA-ribosyltransferase family. As to quaternary structure, homodimer. Within each dimer, one monomer is responsible for RNA recognition and catalysis, while the other monomer binds to the replacement base PreQ1. Requires Zn(2+) as cofactor.

The enzyme catalyses 7-aminomethyl-7-carbaguanine + guanosine(34) in tRNA = 7-aminomethyl-7-carbaguanosine(34) in tRNA + guanine. Its pathway is tRNA modification; tRNA-queuosine biosynthesis. Functionally, catalyzes the base-exchange of a guanine (G) residue with the queuine precursor 7-aminomethyl-7-deazaguanine (PreQ1) at position 34 (anticodon wobble position) in tRNAs with GU(N) anticodons (tRNA-Asp, -Asn, -His and -Tyr). Catalysis occurs through a double-displacement mechanism. The nucleophile active site attacks the C1' of nucleotide 34 to detach the guanine base from the RNA, forming a covalent enzyme-RNA intermediate. The proton acceptor active site deprotonates the incoming PreQ1, allowing a nucleophilic attack on the C1' of the ribose to form the product. After dissociation, two additional enzymatic reactions on the tRNA convert PreQ1 to queuine (Q), resulting in the hypermodified nucleoside queuosine (7-(((4,5-cis-dihydroxy-2-cyclopenten-1-yl)amino)methyl)-7-deazaguanosine). This is Queuine tRNA-ribosyltransferase from Helicobacter pylori (strain ATCC 700392 / 26695) (Campylobacter pylori).